A 127-amino-acid polypeptide reads, in one-letter code: Protein FAM229A (127 aa).

Positions 1–96 are disordered; sequence MLPSSTPGPG…ATEHNPVRPL (96 aa). Low complexity predominate over residues 24-39; sequence RSPAARAPAAASSLGP.

It belongs to the FAM229 family.

In Homo sapiens (Human), this protein is Protein FAM229A (FAM229A).